The chain runs to 769 residues: 5-methyltetrahydropteroyltriglutamate--homocysteine methyltransferase (769 aa).

5-methyltetrahydropteroyltri-L-glutamate contacts are provided by residues 17-20 (RELK) and lysine 118. Residues 441-443 (IGS) and glutamate 494 contribute to the L-homocysteine site. L-methionine contacts are provided by residues 441–443 (IGS) and glutamate 494. Residues 525–526 (RC) and tryptophan 571 each bind 5-methyltetrahydropteroyltri-L-glutamate. L-homocysteine is bound at residue aspartate 609. Residue aspartate 609 participates in L-methionine binding. Glutamate 615 lines the 5-methyltetrahydropteroyltri-L-glutamate pocket. 3 residues coordinate Zn(2+): histidine 651, cysteine 653, and glutamate 675. Catalysis depends on histidine 705, which acts as the Proton donor. Cysteine 737 contributes to the Zn(2+) binding site.

The protein belongs to the vitamin-B12 independent methionine synthase family. The cofactor is Zn(2+).

It catalyses the reaction 5-methyltetrahydropteroyltri-L-glutamate + L-homocysteine = tetrahydropteroyltri-L-glutamate + L-methionine. The protein operates within amino-acid biosynthesis; L-methionine biosynthesis via de novo pathway; L-methionine from L-homocysteine (MetE route): step 1/1. In terms of biological role, catalyzes the transfer of a methyl group from 5-methyltetrahydrofolate to homocysteine resulting in methionine formation. The sequence is that of 5-methyltetrahydropteroyltriglutamate--homocysteine methyltransferase from Blochmanniella floridana.